Here is a 112-residue protein sequence, read N- to C-terminus: UPF0122 protein CPF_1968 (112 aa).

Belongs to the UPF0122 family.

Its function is as follows. Might take part in the signal recognition particle (SRP) pathway. This is inferred from the conservation of its genetic proximity to ftsY/ffh. May be a regulatory protein. The chain is UPF0122 protein CPF_1968 from Clostridium perfringens (strain ATCC 13124 / DSM 756 / JCM 1290 / NCIMB 6125 / NCTC 8237 / Type A).